The primary structure comprises 339 residues: Dual specificity protein phosphatase 12 (339 aa).

The residue at position 1 (methionine 1) is an N-acetylmethionine. Residues 1 to 25 (MLEAQGSNHGCERQAPTASPASSAG) form a disordered region. In terms of domain architecture, Tyrosine-protein phosphatase spans 26–170 (HAVEVRPGLY…LKLYEAMGYE (145 aa)). Cysteine 114 (phosphocysteine intermediate) is an active-site residue. 115–120 (HAGVSR) lines the substrate pocket. Serine 334 carries the phosphoserine modification.

The protein belongs to the protein-tyrosine phosphatase family. Non-receptor class dual specificity subfamily. As to quaternary structure, monomer. It depends on Zn(2+) as a cofactor.

The protein localises to the nucleus. It is found in the cytoplasm. It localises to the cytosol. The catalysed reaction is O-phospho-L-tyrosyl-[protein] + H2O = L-tyrosyl-[protein] + phosphate. The enzyme catalyses O-phospho-L-seryl-[protein] + H2O = L-seryl-[protein] + phosphate. It carries out the reaction O-phospho-L-threonyl-[protein] + H2O = L-threonyl-[protein] + phosphate. Dual specificity phosphatase; can dephosphorylate both phosphotyrosine and phosphoserine or phosphothreonine residues. Can dephosphorylate glucokinase (in vitro). Has phosphatase activity with the synthetic substrate 6,8-difluoro-4-methylumbelliferyl phosphate and other in vitro substrates. The chain is Dual specificity protein phosphatase 12 (Dusp12) from Mus musculus (Mouse).